The following is a 626-amino-acid chain: Basic helix-loop-helix ARNT-like protein 1 (626 aa).

The tract at residues 1–60 (MADQRMDISSTISDFMSPGATDLLSSPLGTSGMDCNRKRKGSSTDYQESMDTDKDDPHGR) is disordered. Phosphoserine; by GSK3-beta is present on Ser-17. Phosphothreonine; by GSK3-beta is present on Thr-21. The Nuclear localization signal motif lies at 36-41 (NRKRKG). The span at 51 to 60 (DTDKDDPHGR) shows a compositional bias: basic and acidic residues. The bHLH domain occupies 72-125 (NAREAHSQIEKRRRDKMNSFIDELASLVPTCNAMSRKLDKLTVLRMAVQHMKTL). Ser-78 is subject to Phosphoserine. Ser-90 carries the phosphoserine; by CK2 modification. Residues 142–152 (LSDDELKHLIL) carry the Nuclear export signal 1 motif. One can recognise a PAS 1 domain in the interval 143–215 (SDDELKHLIL…EQLSSSDTAP (73 aa)). Residue Lys-252 forms a Glycyl lysine isopeptide (Lys-Gly) (interchain with G-Cter in SUMO2 and SUMO3) linkage. Residue Lys-259 forms a Glycyl lysine isopeptide (Lys-Gly) (interchain with G-Cter in SUMO); alternate linkage. Lys-259 participates in a covalent cross-link: Glycyl lysine isopeptide (Lys-Gly) (interchain with G-Cter in SUMO2); alternate. Positions 326-396 (PQPVNGEIRV…ECHRQVLQTR (71 aa)) constitute a PAS 2 domain. The Nuclear export signal 2 motif lies at 361–369 (LAYLPQELL). Residues 401 to 444 (TNCYKFKIKDGSFITLRSRWFSFMNPWTKEVEYIVSTNTVVLAN) form the PAC domain. Disordered stretches follow at residues 457–493 (TASP…AGAG) and 510–597 (RGSS…SNDE). Residues 484–493 (IPGGTRAGAG) are compositionally biased toward gly residues. The tract at residues 508 to 588 (RIRGSSPSSC…IGIDMIDNDQ (81 aa)) is interaction with CIART. Over residues 511–521 (GSSPSSCGSSP) the composition is skewed to low complexity. At Lys-538 the chain carries N6-acetyllysine.

In terms of assembly, component of the circadian clock oscillator which includes the CRY1/2 proteins, CLOCK or NPAS2, BMAL1 or BMAL2, CSNK1D and/or CSNK1E, TIMELESS and the PER1/2/3 proteins. Forms a heterodimer with CLOCK. The CLOCK-BMAL1 heterodimer is required for E-box-dependent transactivation, for CLOCK nuclear translocation and degradation, and, for phosphorylation of both CLOCK and BMAL1. Part of a nuclear complex which also includes RACK1 and PRKCA; RACK1 and PRKCA are recruited to the complex in a circadian manner. Interacts with NPAS2. Interacts with EZH2. Interacts with SUMO3. Interacts with SIRT1. Interacts with AHR. Interacts with ID1, ID2 and ID3. Interacts with DDX4. Interacts with OGT. Interacts with EED and SUZ12. Interacts with MTA1. Interacts with CIART. Interacts with HSP90. Interacts with KAT2B and EP300. Interacts with BHLHE40/DEC1 and BHLHE41/DEC2. Interacts with RELB and the interaction is enhanced in the presence of CLOCK. Interacts with PER1, PER2, CRY1 and CRY2 and this interaction requires a translocation to the nucleus. Interaction of the CLOCK-BMAL1 heterodimer with PER or CRY inhibits transcription activation. Interaction of the CLOCK-BMAL1 with CRY1 is independent of DNA but with PER2 is off DNA. The CLOCK-BMAL1 heterodimer interacts with GSK3B. Interacts with KDM5A. Interacts with KMT2A; in a circadian manner. Interacts with UBE3A. Interacts with PRKCG. Interacts with MAGEL2. Interacts with NCOA2. Interacts with THRAP3. The CLOCK-BMAL1 heterodimer interacts with PASD1. Interacts with PASD1. Interacts with USP9X. Interacts with PIWIL2 (via PIWI domain). Interacts with HDAC3. Interacts with HNF4A. In terms of processing, ubiquitinated, leading to its proteasomal degradation. Deubiquitinated by USP9X. O-glycosylated; contains O-GlcNAc. O-glycosylation by OGT prevents protein degradation by inhibiting ubiquitination. It also stabilizes the CLOCK-BMAL1 heterodimer thereby increasing CLOCK-BMAL1-mediated transcription of genes in the negative loop of the circadian clock such as PER1/2/3 and CRY1/2. Post-translationally, acetylated on Lys-538 by CLOCK during the repression phase of the circadian cycle. Acetylation facilitates recruitment of CRY1 protein and initiates the repression phase of the circadian cycle. Acetylated at Lys-538 by KAT5 during the activation phase of the cycle, leading to recruitment of the positive transcription elongation factor b (P-TEFb) and BRD4, followed by productive elongation of circadian transcripts. Deacetylated by SIRT1, which may result in decreased protein stability. In terms of processing, phosphorylated upon dimerization with CLOCK. Phosphorylation enhances the transcriptional activity, alters the subcellular localization and decreases the stability of the CLOCK-BMAL1 heterodimer by promoting its degradation. Phosphorylation shows circadian variations in the liver with a peak between CT10 to CT14. Phosphorylation at Ser-90 by CK2 is essential for its nuclear localization, its interaction with CLOCK and controls CLOCK nuclear entry. Dephosphorylation at Ser-78 is important for dimerization with CLOCK and transcriptional activity. Sumoylated on Lys-259 upon dimerization with CLOCK. Predominantly conjugated to poly-SUMO2/3 rather than SUMO1 and the level of these conjugates undergo rhythmic variation, peaking at CT9-CT12. Sumoylation localizes it exclusively to the PML body and promotes its ubiquitination in the PML body, ubiquitin-dependent proteasomal degradation and the transcriptional activity of the CLOCK-BMAL1 heterodimer. Post-translationally, undergoes lysosome-mediated degradation in a time-dependent manner in the liver.

It localises to the nucleus. It is found in the cytoplasm. The protein localises to the PML body. In terms of biological role, transcriptional activator which forms a core component of the circadian clock. The circadian clock, an internal time-keeping system, regulates various physiological processes through the generation of approximately 24 hour circadian rhythms in gene expression, which are translated into rhythms in metabolism and behavior. It is derived from the Latin roots 'circa' (about) and 'diem' (day) and acts as an important regulator of a wide array of physiological functions including metabolism, sleep, body temperature, blood pressure, endocrine, immune, cardiovascular, and renal function. Consists of two major components: the central clock, residing in the suprachiasmatic nucleus (SCN) of the brain, and the peripheral clocks that are present in nearly every tissue and organ system. Both the central and peripheral clocks can be reset by environmental cues, also known as Zeitgebers (German for 'timegivers'). The predominant Zeitgeber for the central clock is light, which is sensed by retina and signals directly to the SCN. The central clock entrains the peripheral clocks through neuronal and hormonal signals, body temperature and feeding-related cues, aligning all clocks with the external light/dark cycle. Circadian rhythms allow an organism to achieve temporal homeostasis with its environment at the molecular level by regulating gene expression to create a peak of protein expression once every 24 hours to control when a particular physiological process is most active with respect to the solar day. Transcription and translation of core clock components (CLOCK, NPAS2, BMAL1, BMAL2, PER1, PER2, PER3, CRY1 and CRY2) plays a critical role in rhythm generation, whereas delays imposed by post-translational modifications (PTMs) are important for determining the period (tau) of the rhythms (tau refers to the period of a rhythm and is the length, in time, of one complete cycle). A diurnal rhythm is synchronized with the day/night cycle, while the ultradian and infradian rhythms have a period shorter and longer than 24 hours, respectively. Disruptions in the circadian rhythms contribute to the pathology of cardiovascular diseases, cancer, metabolic syndromes and aging. A transcription/translation feedback loop (TTFL) forms the core of the molecular circadian clock mechanism. Transcription factors, CLOCK or NPAS2 and BMAL1 or BMAL2, form the positive limb of the feedback loop, act in the form of a heterodimer and activate the transcription of core clock genes and clock-controlled genes (involved in key metabolic processes), harboring E-box elements (5'-CACGTG-3') within their promoters. The core clock genes: PER1/2/3 and CRY1/2 which are transcriptional repressors form the negative limb of the feedback loop and interact with the CLOCK|NPAS2-BMAL1|BMAL2 heterodimer inhibiting its activity and thereby negatively regulating their own expression. This heterodimer also activates nuclear receptors NR1D1, NR1D2, RORA, RORB and RORG, which form a second feedback loop and which activate and repress BMAL1 transcription, respectively. BMAL1 positively regulates myogenesis and negatively regulates adipogenesis via the transcriptional control of the genes of the canonical Wnt signaling pathway. Plays a role in normal pancreatic beta-cell function; regulates glucose-stimulated insulin secretion via the regulation of antioxidant genes NFE2L2/NRF2 and its targets SESN2, PRDX3, CCLC and CCLM. Negatively regulates the mTORC1 signaling pathway; regulates the expression of MTOR and DEPTOR. Controls diurnal oscillations of Ly6C inflammatory monocytes; rhythmic recruitment of the PRC2 complex imparts diurnal variation to chemokine expression that is necessary to sustain Ly6C monocyte rhythms. Regulates the expression of HSD3B2, STAR, PTGS2, CYP11A1, CYP19A1 and LHCGR in the ovary and also the genes involved in hair growth. Plays an important role in adult hippocampal neurogenesis by regulating the timely entry of neural stem/progenitor cells (NSPCs) into the cell cycle and the number of cell divisions that take place prior to cell-cycle exit. Regulates the circadian expression of CIART. The CLOCK-BMAL1 heterodimer regulates the circadian expression of SERPINE1/PAI1, VWF, B3, CCRN4L/NOC, NAMPT, DBP, MYOD1, PPARGC1A, PPARGC1B, SIRT1, GYS2, F7, NGFR, GNRHR, BHLHE40/DEC1, ATF4, MTA1 and also genes implicated in glucose and lipid metabolism. Promotes rhythmic chromatin opening, regulating the DNA accessibility of other transcription factors. The NPAS2-BMAL1 heterodimer positively regulates the expression of MAOA, F7 and LDHA and modulates the circadian rhythm of daytime contrast sensitivity by regulating the rhythmic expression of adenylate cyclase type 1 (ADCY1) in the retina. The preferred binding motif for the CLOCK-BMAL1 heterodimer is 5'-CACGTGA-3', which contains a flanking adenine nucleotide at the 3-prime end of the canonical 6-nucleotide E-box sequence. CLOCK specifically binds to the half-site 5'-CAC-3', while BMAL1 binds to the half-site 5'-GTGA-3'. The CLOCK-BMAL1 heterodimer also recognizes the non-canonical E-box motifs 5'-AACGTGA-3' and 5'-CATGTGA-3'. Essential for the rhythmic interaction of CLOCK with ASS1 and plays a critical role in positively regulating CLOCK-mediated acetylation of ASS1. Plays a role in protecting against lethal sepsis by limiting the expression of immune checkpoint protein CD274 in macrophages in a PKM2-dependent manner. Regulates the diurnal rhythms of skeletal muscle metabolism via transcriptional activation of genes promoting triglyceride synthesis (DGAT2) and metabolic efficiency (COQ10B). In Equus caballus (Horse), this protein is Basic helix-loop-helix ARNT-like protein 1 (BMAL1).